The sequence spans 463 residues: L-seryl-tRNA(Sec) selenium transferase (463 aa).

The residue at position 295 (Lys-295) is an N6-(pyridoxal phosphate)lysine.

Belongs to the SelA family. In terms of assembly, homodecamer; pentamer of dimers. Binds only one seryl-tRNA(Sec) per dimer. It depends on pyridoxal 5'-phosphate as a cofactor.

It is found in the cytoplasm. The enzyme catalyses L-seryl-tRNA(Sec) + selenophosphate + H(+) = L-selenocysteinyl-tRNA(Sec) + phosphate. It functions in the pathway aminoacyl-tRNA biosynthesis; selenocysteinyl-tRNA(Sec) biosynthesis; selenocysteinyl-tRNA(Sec) from L-seryl-tRNA(Sec) (bacterial route): step 1/1. Functionally, converts seryl-tRNA(Sec) to selenocysteinyl-tRNA(Sec) required for selenoprotein biosynthesis. This Salmonella typhimurium (strain LT2 / SGSC1412 / ATCC 700720) protein is L-seryl-tRNA(Sec) selenium transferase.